The following is a 316-amino-acid chain: Biotin synthase (316 aa).

Positions 42–268 (LCGESVDLCT…INPTAYIRMA (227 aa)) constitute a Radical SAM core domain. [4Fe-4S] cluster-binding residues include Cys-60, Cys-64, and Cys-67. [2Fe-2S] cluster contacts are provided by Ser-104, Cys-136, Cys-196, and Arg-266.

Belongs to the radical SAM superfamily. Biotin synthase family. In terms of assembly, homodimer. Requires [4Fe-4S] cluster as cofactor. [2Fe-2S] cluster serves as cofactor.

It carries out the reaction (4R,5S)-dethiobiotin + (sulfur carrier)-SH + 2 reduced [2Fe-2S]-[ferredoxin] + 2 S-adenosyl-L-methionine = (sulfur carrier)-H + biotin + 2 5'-deoxyadenosine + 2 L-methionine + 2 oxidized [2Fe-2S]-[ferredoxin]. Its pathway is cofactor biosynthesis; biotin biosynthesis; biotin from 7,8-diaminononanoate: step 2/2. In terms of biological role, catalyzes the conversion of dethiobiotin (DTB) to biotin by the insertion of a sulfur atom into dethiobiotin via a radical-based mechanism. In Clostridium beijerinckii (strain ATCC 51743 / NCIMB 8052) (Clostridium acetobutylicum), this protein is Biotin synthase.